The sequence spans 254 residues: Imidazole glycerol phosphate synthase subunit HisF (254 aa).

Active-site residues include Asp-12 and Asp-131.

It belongs to the HisA/HisF family. Heterodimer of HisH and HisF.

It is found in the cytoplasm. The catalysed reaction is 5-[(5-phospho-1-deoxy-D-ribulos-1-ylimino)methylamino]-1-(5-phospho-beta-D-ribosyl)imidazole-4-carboxamide + L-glutamine = D-erythro-1-(imidazol-4-yl)glycerol 3-phosphate + 5-amino-1-(5-phospho-beta-D-ribosyl)imidazole-4-carboxamide + L-glutamate + H(+). The protein operates within amino-acid biosynthesis; L-histidine biosynthesis; L-histidine from 5-phospho-alpha-D-ribose 1-diphosphate: step 5/9. Functionally, IGPS catalyzes the conversion of PRFAR and glutamine to IGP, AICAR and glutamate. The HisF subunit catalyzes the cyclization activity that produces IGP and AICAR from PRFAR using the ammonia provided by the HisH subunit. The protein is Imidazole glycerol phosphate synthase subunit HisF of Kocuria rhizophila (strain ATCC 9341 / DSM 348 / NBRC 103217 / DC2201).